The chain runs to 144 residues: D-aminoacyl-tRNA deacylase (144 aa).

A Gly-cisPro motif, important for rejection of L-amino acids motif is present at residues 137-138 (GP).

Belongs to the DTD family. In terms of assembly, homodimer.

Its subcellular location is the cytoplasm. It carries out the reaction glycyl-tRNA(Ala) + H2O = tRNA(Ala) + glycine + H(+). The catalysed reaction is a D-aminoacyl-tRNA + H2O = a tRNA + a D-alpha-amino acid + H(+). An aminoacyl-tRNA editing enzyme that deacylates mischarged D-aminoacyl-tRNAs. Also deacylates mischarged glycyl-tRNA(Ala), protecting cells against glycine mischarging by AlaRS. Acts via tRNA-based rather than protein-based catalysis; rejects L-amino acids rather than detecting D-amino acids in the active site. By recycling D-aminoacyl-tRNA to D-amino acids and free tRNA molecules, this enzyme counteracts the toxicity associated with the formation of D-aminoacyl-tRNA entities in vivo and helps enforce protein L-homochirality. In Marinomonas sp. (strain MWYL1), this protein is D-aminoacyl-tRNA deacylase.